The following is a 921-amino-acid chain: Phototropin-1A (921 aa).

Positions 1–11 (MASKGTEGGHG) are enriched in gly residues. 2 disordered regions span residues 1 to 59 (MASK…SPFL) and 88 to 118 (TGLP…QSAA). Over residues 40 to 51 (SSASSFRTAAAA) the composition is skewed to low complexity. The span at 97–117 (RPSSGSARTSSEDNPQQQQSA) shows a compositional bias: polar residues. Residues 123-197 (VSEELRAALS…KIRQSLANGS (75 aa)) form the PAS 1 domain. Residues 172-177 (NCRFLQ), Arg190, Asn205, Asn215, and Gln236 contribute to the FMN site. At Cys173 the chain carries S-4a-FMN cysteine. Residues 197 to 251 (SNYCGRILNYKKDGTPFWNLLTIAPIKDEDGRLLKFIGMQVEVSKYTEGKKDTVV) enclose the PAC 1 domain. The span at 286–295 (RSLSESSNNT) shows a compositional bias: polar residues. Disordered regions lie at residues 286-347 (RSLS…NRTR) and 364-390 (SVEK…ESFE). 2 stretches are compositionally biased toward basic and acidic residues: residues 312–321 (PSKRSSESGS) and 364–376 (SVEK…RDED). Residues 400 to 473 (RGIDLATTLE…RKIRDAIDNQ (74 aa)) enclose the PAS 2 domain. FMN-binding positions include 449 to 454 (NCRFLQ), Arg467, Asn482, Asn492, and Gln513. The residue at position 450 (Cys450) is an S-4a-FMN cysteine. A PAC 2 domain is found at 474 to 528 (AEVTVQLINYTKSGKKFWNLFHLQPMRDQKGDVQYFIGVQLDGTEHVQDDAAKEG). The region spanning 594–881 (FRPVKPLGSG…ANEIKGHPFF (288 aa)) is the Protein kinase domain. ATP is bound by residues 600 to 608 (LGSGDTGSV) and Lys623. Asp719 acts as the Proton acceptor in catalysis.

It belongs to the protein kinase superfamily. Ser/Thr protein kinase family. As to quaternary structure, homodimer. It depends on FMN as a cofactor. Autophosphorylated in response to blue light irradiation. In terms of processing, 2 molecules of FMN bind covalently to cysteines after exposure to blue light and are reversed in the dark. In terms of tissue distribution, highly expressed in coleoptiles of dark-grown seedlings.

The enzyme catalyses L-seryl-[protein] + ATP = O-phospho-L-seryl-[protein] + ADP + H(+). It catalyses the reaction L-threonyl-[protein] + ATP = O-phospho-L-threonyl-[protein] + ADP + H(+). Functionally, protein kinase that acts as a blue light photoreceptor in a signal-transduction pathway for phototropic responses. Regulates a wide range of physiological activities in plants that maximize the efficiency of photosynthesis, such as chloroplast relocations, stomata opening, and leaf expansion. The protein is Phototropin-1A (PHOT1A) of Oryza sativa subsp. japonica (Rice).